Consider the following 364-residue polypeptide: V-type proton ATPase subunit d (364 aa).

Belongs to the V-ATPase V0D/AC39 subunit family. As to quaternary structure, V-ATPase is a heteromultimeric enzyme composed of a peripheral catalytic V1 complex (components A to H) attached to an integral membrane V0 proton pore complex (components: a, c, c', c'', d, e, f and VOA1).

Its subcellular location is the vacuole membrane. Its function is as follows. Subunit of the V0 complex of vacuolar(H+)-ATPase (V-ATPase), a multisubunit enzyme composed of a peripheral complex (V1) that hydrolyzes ATP and a membrane integral complex (V0) that translocates protons. V-ATPase is responsible for acidifying and maintaining the pH of intracellular compartments. This subunit is a non-integral membrane component of the membrane pore domain and is required for proper assembly of the V0 sector. Might be involved in the regulated assembly of V1 subunits onto the membrane sector or alternatively may prevent the passage of protons through V0 pores. This Neurospora crassa (strain ATCC 24698 / 74-OR23-1A / CBS 708.71 / DSM 1257 / FGSC 987) protein is V-type proton ATPase subunit d.